Consider the following 123-residue polypeptide: Small ribosomal subunit protein uS13 (123 aa).

Positions 99–113 are enriched in basic residues; it reads RGQRTHTNARTRKGG. The tract at residues 99–123 is disordered; it reads RGQRTHTNARTRKGGSRLAVAAKKK.

It belongs to the universal ribosomal protein uS13 family. As to quaternary structure, part of the 30S ribosomal subunit. Forms a loose heterodimer with protein S19. Forms two bridges to the 50S subunit in the 70S ribosome.

Its function is as follows. Located at the top of the head of the 30S subunit, it contacts several helices of the 16S rRNA. In the 70S ribosome it contacts the 23S rRNA (bridge B1a) and protein L5 of the 50S subunit (bridge B1b), connecting the 2 subunits; these bridges are implicated in subunit movement. Contacts the tRNAs in the A and P-sites. This Anaplasma phagocytophilum (strain HZ) protein is Small ribosomal subunit protein uS13.